Here is a 1070-residue protein sequence, read N- to C-terminus: Ubiquitin-protein ligase E3B (1070 aa).

Residue M1 is modified to N-acetylmethionine. One can recognise an IQ domain in the interval R29–D58. S421 is modified (phosphoserine). The 367-residue stretch at S704–S1070 folds into the HECT domain. Residue C1038 is the Glycyl thioester intermediate of the active site.

In terms of tissue distribution, widely expressed. High expression is observed in developing central nervous system.

It localises to the postsynaptic density. The enzyme catalyses S-ubiquitinyl-[E2 ubiquitin-conjugating enzyme]-L-cysteine + [acceptor protein]-L-lysine = [E2 ubiquitin-conjugating enzyme]-L-cysteine + N(6)-ubiquitinyl-[acceptor protein]-L-lysine.. The protein operates within protein modification; protein ubiquitination. Functionally, E3 ubiquitin-protein ligase which accepts ubiquitin from an E2 ubiquitin-conjugating enzyme in the form of a thioester and then directly transfers the ubiquitin to targeted substrates. Ubiquitinates BCKDK and targets it for degradation, thereby regulating various metabolic processes. Involved in the positive regulation of neurite branching in hippocampal neurons and the control of neuronal spine number and morphology, through the ubiquitination of PPP3CC. The polypeptide is Ubiquitin-protein ligase E3B (Ube3b) (Mus musculus (Mouse)).